Reading from the N-terminus, the 265-residue chain is Hydroxyethylthiazole kinase 2 (265 aa).

Position 39 (Met-39) interacts with substrate. ATP is bound by residues Lys-115 and Thr-168. Gly-195 contacts substrate.

It belongs to the Thz kinase family. Mg(2+) serves as cofactor.

The catalysed reaction is 5-(2-hydroxyethyl)-4-methylthiazole + ATP = 4-methyl-5-(2-phosphooxyethyl)-thiazole + ADP + H(+). The protein operates within cofactor biosynthesis; thiamine diphosphate biosynthesis; 4-methyl-5-(2-phosphoethyl)-thiazole from 5-(2-hydroxyethyl)-4-methylthiazole: step 1/1. In terms of biological role, catalyzes the phosphorylation of the hydroxyl group of 4-methyl-5-beta-hydroxyethylthiazole (THZ). This Clostridium botulinum (strain 657 / Type Ba4) protein is Hydroxyethylthiazole kinase 2.